The following is a 445-amino-acid chain: Phosphoglucosamine mutase (445 aa).

S102 acts as the Phosphoserine intermediate in catalysis. Mg(2+) is bound by residues S102, D241, D243, and D245. S102 is subject to Phosphoserine.

This sequence belongs to the phosphohexose mutase family. It depends on Mg(2+) as a cofactor. Activated by phosphorylation.

It carries out the reaction alpha-D-glucosamine 1-phosphate = D-glucosamine 6-phosphate. Its function is as follows. Catalyzes the conversion of glucosamine-6-phosphate to glucosamine-1-phosphate. In Shigella boydii serotype 4 (strain Sb227), this protein is Phosphoglucosamine mutase.